Consider the following 1129-residue polypeptide: CRISPR-associated endonuclease Cas12b (1129 aa).

The WED-I (OBD-I) domain stretch occupies residues 1 to 14; that stretch reads MAVKSIKVKLRLDD. A binds sgRNA region spans residues 4 to 9; sequence KSIKVK. Positions 15–386 are REC1 (Helical-1)domain; that stretch reads MPEIRAGLWK…FATFTLPDAT (372 aa). Binds DNA protospacer adjacent motif (PAM) on target DNA stretches follow at residues 118–122 and 143–144; these read QQIAR and GN. The segment at 387–518 is WED-II (OBD-II) domain; it reads AHPIWTRFDK…QSQSEARGER (132 aa). Positions 442-446 are binds sgRNA; sequence SMSEQ. Positions 519–628 are ruvC-I domain; sequence RPPYAAVFRL…LLKLPGETES (110 aa). Residue Asp-570 is the For DNase activity of RuvC domain of the active site. A binds non-target ssDNA region spans residues 573–574; the sequence is LR. The tract at residues 629–658 is bridge helix domain; that stretch reads KDLRAIREERQRTLRQLRTQLAYLRLLVRC. The segment at 659–784 is REC2 (Helical-II) domain; sequence GSEDVGRRER…SFFGKVSGQV (126 aa). Binds sgRNA regions lie at residues 742-746, 753-754, 792-796, 800-819, and 835-839; these read RPKIR, VG, RFAIT, HIDHAKEDRLKKLADRIIME, and WVAKY. The tract at residues 785 to 900 is ruvC-II domain; that stretch reads IRAEKGSRFA…GTMYAAFSSR (116 aa). Residue Glu-848 is the For DNase activity of RuvC domain of the active site. The tract at residues 897 to 900 is binds non-target ssDNA; sequence FSSR. 2 residues coordinate phosphate: Ser-899 and Arg-911. The tract at residues 901-974 is nuc-I domain; sequence FDARTGAPGI…SAEEGDFHQI (74 aa). Residues 973 to 978 form a binds sgRNA region; that stretch reads QIHADL. The segment at 975–993 is ruvC-III domain; the sequence is HADLNAAQNLQQRLWSDFD. Asp-977 functions as the For DNase activity of RuvC domain in the catalytic mechanism. The segment at 994-1129 is nuc-II domain; it reads ISQIRLRCDW…DSACENTGDI (136 aa).

This sequence belongs to the CRISPR-associated endonuclease Cas12b family. As to quaternary structure, monomer. A divalent metal cation serves as cofactor.

Functionally, CRISPR (clustered regularly interspaced short palindromic repeat), is an adaptive immune system that provides protection against mobile genetic elements (viruses, transposable elements and conjugative plasmids). CRISPR clusters contain sequences complementary to antecedent mobile elements and target invading nucleic acids. CRISPR clusters are transcribed and processed into CRISPR RNA (crRNA). In type II CRISPR systems correct processing of pre-crRNA requires a trans-encoded small RNA (tracrRNA), endogenous ribonuclease 3 (rnc) and this protein. The tracrRNA serves as a guide for ribonuclease 3-aided processing of pre-crRNA. Protein-crRNA-tracrRNA endonucleolytically cleave dsDNA target complementary to the spacer; protein is inactive in the absence of crRNA homologous to the target and tracrRNA. Recognizes a short motif in the CRISPR repeat sequences (the 5' PAM or protospacer adjacent motif, TTN in this organism) to help distinguish self versus nonself, as targets within the bacterial CRISPR locus do not have PAMs. PAM recognition is also required for catalytic activity. Cleavage results in staggered 6-8 base 5'-overhangs 14-17 and 23-24 bases downstream of the PAM (protospacer adjacent motif) on the non-target and target strands respectively. Both target and non-target strand DNA are probably independently cleaved in the same active site. The chain is CRISPR-associated endonuclease Cas12b from Alicyclobacillus acidoterrestris (strain ATCC 49025 / DSM 3922 / CIP 106132 / NCIMB 13137 / GD3B).